Consider the following 86-residue polypeptide: uncharacterized protein (86 aa).

To B.subtilis spore coat protein C.

This is an uncharacterized protein from Bacillus subtilis (strain 168).